The sequence spans 463 residues: MSLSLWQQCLARLQDELPATEFSMWIRPLQAELSDNTLALYAPNRFVLDWVRDKYINNINGLLNDFCGSDAPVLRFEVGSKPIVPVAVSSAASSGASVPPAAVRASSLARPSWERVTAQPELSYRSNVNPKHTFDNFVEGKSNQLARAAARQVADNPGGAYNPLFLYGGTGLGKTHLLHAVGNGIMARKPNAKVVYMHSERFVQDMVKALQNNAIEEFKRYYRSVDALLIDDIQFFANKERSQEEFFHTFNALLEGNQQIILTSDRYPKEINGVEDRLKSRFGWGLTVAIEPPELETRVAILMKKADENDIRLPGEVAFFIAKRLRSNVRELEGALNRVIANANFTGRAITIDFVREALRDLLALQEKLVTIDNIQKTVAEYYKIKVADLLSKRRSRSVARPRQMAMALAKELTNHSLPEIGDAFGGRDHTTVLHACRKIEQLREESHDIKEDFSNLIRTLSS.

Residues 1–83 form a domain I, interacts with DnaA modulators region; it reads MSLSLWQQCL…LRFEVGSKPI (83 aa). The segment at 83 to 126 is domain II; it reads IVPVAVSSAASSGASVPPAAVRASSLARPSWERVTAQPELSYRS. Residues 127–343 are domain III, AAA+ region; the sequence is NVNPKHTFDN…GALNRVIANA (217 aa). ATP is bound by residues Gly-171, Gly-173, Lys-174, and Thr-175. Residues 344-463 are domain IV, binds dsDNA; that stretch reads NFTGRAITID…FSNLIRTLSS (120 aa).

The protein belongs to the DnaA family. As to quaternary structure, oligomerizes as a right-handed, spiral filament on DNA at oriC.

The protein localises to the cytoplasm. In terms of biological role, plays an essential role in the initiation and regulation of chromosomal replication. ATP-DnaA binds to the origin of replication (oriC) to initiate formation of the DNA replication initiation complex once per cell cycle. Binds the DnaA box (a 9 base pair repeat at the origin) and separates the double-stranded (ds)DNA. Forms a right-handed helical filament on oriC DNA; dsDNA binds to the exterior of the filament while single-stranded (ss)DNA is stabiized in the filament's interior. The ATP-DnaA-oriC complex binds and stabilizes one strand of the AT-rich DNA unwinding element (DUE), permitting loading of DNA polymerase. After initiation quickly degrades to an ADP-DnaA complex that is not apt for DNA replication. Binds acidic phospholipids. The sequence is that of Chromosomal replication initiator protein DnaA from Edwardsiella ictaluri (strain 93-146).